Here is a 441-residue protein sequence, read N- to C-terminus: Ribulose bisphosphate carboxylase large chain (441 aa).

2 residues coordinate substrate: asparagine 89 and threonine 139. Lysine 141 serves as the catalytic Proton acceptor. Lysine 143 contributes to the substrate binding site. Mg(2+)-binding residues include lysine 167, aspartate 169, and glutamate 170. Lysine 167 bears the N6-carboxylysine mark. The Proton acceptor role is filled by histidine 260. Arginine 261, histidine 293, and serine 345 together coordinate substrate.

This sequence belongs to the RuBisCO large chain family. Type I subfamily. As to quaternary structure, heterohexadecamer of 8 large chains and 8 small chains; disulfide-linked. The disulfide link is formed within the large subunit homodimers. Mg(2+) is required as a cofactor. Post-translationally, the disulfide bond which can form in the large chain dimeric partners within the hexadecamer appears to be associated with oxidative stress and protein turnover.

It localises to the plastid. The protein localises to the chloroplast. It catalyses the reaction 2 (2R)-3-phosphoglycerate + 2 H(+) = D-ribulose 1,5-bisphosphate + CO2 + H2O. It carries out the reaction D-ribulose 1,5-bisphosphate + O2 = 2-phosphoglycolate + (2R)-3-phosphoglycerate + 2 H(+). Its function is as follows. RuBisCO catalyzes two reactions: the carboxylation of D-ribulose 1,5-bisphosphate, the primary event in carbon dioxide fixation, as well as the oxidative fragmentation of the pentose substrate in the photorespiration process. Both reactions occur simultaneously and in competition at the same active site. This chain is Ribulose bisphosphate carboxylase large chain, found in Fouquieria splendens (Ocotillo).